Consider the following 195-residue polypeptide: Probable GTP-binding protein EngB (195 aa).

Residues 24–195 (GLKEVALAGR…MIFNAIEKYL (172 aa)) form the EngB-type G domain. GTP contacts are provided by residues 32–39 (GRSNVGKS), 59–63 (GKTQT), 77–80 (DVPG), 144–147 (TKED), and 176–178 (YTA). Residues serine 39 and threonine 61 each coordinate Mg(2+).

The protein belongs to the TRAFAC class TrmE-Era-EngA-EngB-Septin-like GTPase superfamily. EngB GTPase family. It depends on Mg(2+) as a cofactor.

Necessary for normal cell division and for the maintenance of normal septation. The polypeptide is Probable GTP-binding protein EngB (Macrococcus caseolyticus (strain JCSC5402) (Macrococcoides caseolyticum)).